Reading from the N-terminus, the 171-residue chain is 3-hydroxydecanoyl-[acyl-carrier-protein] dehydratase (171 aa).

The active site involves histidine 70.

The protein belongs to the thioester dehydratase family. FabA subfamily. Homodimer.

It localises to the cytoplasm. It catalyses the reaction a (3R)-hydroxyacyl-[ACP] = a (2E)-enoyl-[ACP] + H2O. The enzyme catalyses (3R)-hydroxydecanoyl-[ACP] = (2E)-decenoyl-[ACP] + H2O. The catalysed reaction is (2E)-decenoyl-[ACP] = (3Z)-decenoyl-[ACP]. It functions in the pathway lipid metabolism; fatty acid biosynthesis. Necessary for the introduction of cis unsaturation into fatty acids. Catalyzes the dehydration of (3R)-3-hydroxydecanoyl-ACP to E-(2)-decenoyl-ACP and then its isomerization to Z-(3)-decenoyl-ACP. Can catalyze the dehydratase reaction for beta-hydroxyacyl-ACPs with saturated chain lengths up to 16:0, being most active on intermediate chain length. The chain is 3-hydroxydecanoyl-[acyl-carrier-protein] dehydratase from Xanthomonas oryzae pv. oryzae (strain MAFF 311018).